Here is a 533-residue protein sequence, read N- to C-terminus: Protein mono-ADP-ribosyltransferase PARP3 (533 aa).

The tract at residues 1–30 (MAPKRKASVQTEGSKKRRQGTEEEDSFRST) is disordered. Lys-6 bears the N6-(ADP-ribosyl)lysine mark. Glu-12 is subject to ADP-ribosyl glutamic acid. A Nuclear localization signal motif is present at residues 14–18 (SKKRR). ADP-ribosyl glutamic acid occurs at positions 24 and 32. Positions 57 to 147 (GIQVHEDYDC…DRFVAQPNKY (91 aa)) constitute a WGR domain. An ADP-ribosyl aspartic acid modification is found at Asp-138. ADP-ribosyl glutamic acid is present on residues Glu-160, Glu-230, Glu-309, and Glu-310. In terms of domain architecture, PARP alpha-helical spans 181–299 (PCSLDPATQN…DIELAQTLQA (119 aa)). The 221-residue stretch at 313–533 (HPLDRDYQLL…RLRYLLEIHL (221 aa)) folds into the PARP catalytic domain.

This sequence belongs to the ARTD/PARP family. As to quaternary structure, interacts with PARP1; leading to activate PARP1 in absence of DNA. Interacts with PRKDC. Interacts with XRCC5/Ku80; the interaction is dependent on nucleic acids. Interacts with XRCC6/Ku70; the interaction is dependent on nucleic acids. Interacts with EZH2, HDAC1, HDAC2, SUZ12, YY1, LRIG3 and LIG4. Post-translationally, auto-ADP-ribosylated.

Its subcellular location is the nucleus. It is found in the chromosome. The protein resides in the cytoplasm. The protein localises to the cytoskeleton. It localises to the microtubule organizing center. Its subcellular location is the centrosome. It is found in the centriole. The enzyme catalyses L-aspartyl-[protein] + NAD(+) = 4-O-(ADP-D-ribosyl)-L-aspartyl-[protein] + nicotinamide. It carries out the reaction L-glutamyl-[protein] + NAD(+) = 5-O-(ADP-D-ribosyl)-L-glutamyl-[protein] + nicotinamide. The catalysed reaction is L-lysyl-[protein] + NAD(+) = N(6)-(ADP-D-ribosyl)-L-lysyl-[protein] + nicotinamide + H(+). Mono-ADP-ribosyltransferase that mediates mono-ADP-ribosylation of target proteins and plays a key role in the response to DNA damage. Mediates mono-ADP-ribosylation of glutamate, aspartate or lysine residues on target proteins. In contrast to PARP1 and PARP2, it is not able to mediate poly-ADP-ribosylation. Involved in DNA repair by mediating mono-ADP-ribosylation of a limited number of acceptor proteins involved in chromatin architecture and in DNA metabolism, such as histone H2B, XRCC5 and XRCC6. ADP-ribosylation follows DNA damage and appears as an obligatory step in a detection/signaling pathway leading to the reparation of DNA strand breaks. Involved in single-strand break repair by catalyzing mono-ADP-ribosylation of histone H2B on 'Glu-2' (H2BE2ADPr) of nucleosomes containing nicked DNA. Cooperates with the XRCC5-XRCC6 (Ku80-Ku70) heterodimer to limit end-resection thereby promoting accurate NHEJ. Suppresses G-quadruplex (G4) structures in response to DNA damage. Associates with a number of DNA repair factors and is involved in the response to exogenous and endogenous DNA strand breaks. Together with APLF, promotes the retention of the LIG4-XRCC4 complex on chromatin and accelerate DNA ligation during non-homologous end-joining (NHEJ). May link the DNA damage surveillance network to the mitotic fidelity checkpoint. Acts as a negative regulator of immunoglobulin class switch recombination, probably by controlling the level of AICDA /AID on the chromatin. In addition to proteins, also able to ADP-ribosylate DNA: mediates DNA mono-ADP-ribosylation of DNA strand break termini via covalent addition of a single ADP-ribose moiety to a 5'- or 3'-terminal phosphate residues in DNA containing multiple strand breaks. The polypeptide is Protein mono-ADP-ribosyltransferase PARP3 (Mus musculus (Mouse)).